Consider the following 469-residue polypeptide: Ribulose bisphosphate carboxylase large chain (469 aa).

Position 5 is an N6,N6,N6-trimethyllysine (Lys-5). Asn-114 and Thr-164 together coordinate substrate. Catalysis depends on Lys-166, which acts as the Proton acceptor. A substrate-binding site is contributed by Lys-168. The Mg(2+) site is built by Lys-192, Asp-194, and Glu-195. An N6-carboxylysine modification is found at Lys-192. His-285 serves as the catalytic Proton acceptor. Substrate-binding residues include Arg-286, His-318, and Ser-370.

Belongs to the RuBisCO large chain family. Type I subfamily. Heterohexadecamer of 8 large chains and 8 small chains; disulfide-linked. The disulfide link is formed within the large subunit homodimers. The cofactor is Mg(2+). The disulfide bond which can form in the large chain dimeric partners within the hexadecamer appears to be associated with oxidative stress and protein turnover.

The protein resides in the plastid. Its subcellular location is the chloroplast. The enzyme catalyses 2 (2R)-3-phosphoglycerate + 2 H(+) = D-ribulose 1,5-bisphosphate + CO2 + H2O. It catalyses the reaction D-ribulose 1,5-bisphosphate + O2 = 2-phosphoglycolate + (2R)-3-phosphoglycerate + 2 H(+). RuBisCO catalyzes two reactions: the carboxylation of D-ribulose 1,5-bisphosphate, the primary event in carbon dioxide fixation, as well as the oxidative fragmentation of the pentose substrate in the photorespiration process. Both reactions occur simultaneously and in competition at the same active site. The chain is Ribulose bisphosphate carboxylase large chain from Calycophyllum candidissimum (Degame lemonwood tree).